The sequence spans 206 residues: Large ribosomal subunit protein eL13x (206 aa).

Residues asparagine 186–lysine 206 are disordered. Positions arginine 196 to lysine 206 are enriched in basic and acidic residues.

It belongs to the eukaryotic ribosomal protein eL13 family.

This is Large ribosomal subunit protein eL13x (RPL13D) from Arabidopsis thaliana (Mouse-ear cress).